The following is a 173-amino-acid chain: Shikimate kinase (173 aa).

14 to 19 (GAGKST) contributes to the ATP binding site. Residue S18 coordinates Mg(2+). Residues D36, R60, and G82 each coordinate substrate. K120 contacts ATP. Position 140 (R140) interacts with substrate.

This sequence belongs to the shikimate kinase family. Monomer. Mg(2+) serves as cofactor.

It localises to the cytoplasm. The catalysed reaction is shikimate + ATP = 3-phosphoshikimate + ADP + H(+). The protein operates within metabolic intermediate biosynthesis; chorismate biosynthesis; chorismate from D-erythrose 4-phosphate and phosphoenolpyruvate: step 5/7. In terms of biological role, catalyzes the specific phosphorylation of the 3-hydroxyl group of shikimic acid using ATP as a cosubstrate. This is Shikimate kinase (aroK) from Wigglesworthia glossinidia brevipalpis.